A 249-amino-acid chain; its full sequence is Interleukin-1 receptor-associated kinase 1-binding protein 1 homolog (249 aa).

This sequence belongs to the IRAK1BP1 family.

It localises to the cytoplasm. Its subcellular location is the nucleus. Functionally, may be part of a signaling pathway that leads to NF-kappa-B activation. In Danio rerio (Zebrafish), this protein is Interleukin-1 receptor-associated kinase 1-binding protein 1 homolog (irak1bp1).